Reading from the N-terminus, the 273-residue chain is Cilia- and flagella-associated protein 298-B (273 aa).

It belongs to the CFAP298 family.

It is found in the cytoplasm. The protein localises to the cytoskeleton. It localises to the cilium basal body. Functionally, plays a role in motile cilium function, possibly by acting on outer dynein arm assembly. Seems to be important for initiation rather than maintenance of cilium motility. Required for correct positioning of the cilium at the apical cell surface, suggesting an additional role in the planar cell polarity (PCP) pathway. May suppress canonical Wnt signaling activity. This chain is Cilia- and flagella-associated protein 298-B (cfap298-b), found in Xenopus laevis (African clawed frog).